The chain runs to 391 residues: Multidrug resistance protein MdtL (391 aa).

12 consecutive transmembrane segments (helical) span residues 4 to 24, 42 to 62, 69 to 89, 93 to 113, 131 to 151, 158 to 178, 203 to 222, 245 to 265, 269 to 289, 293 to 313, 331 to 351, and 356 to 376; these read FLIC…MYLV, IAFS…GKVA, PVAI…SLAE, LFLA…VVAF, LLNG…HLIM, SLFW…LFIL, FFLS…LTFV, ALTA…LGIF, TLMI…AVSP, VSLF…GVAM, LGIA…VVGI, and MLIG…MFVA.

The protein belongs to the major facilitator superfamily. DHA1 family. MdtL (TC 2.A.1.2.22) subfamily.

The protein resides in the cell inner membrane. In terms of biological role, confers resistance to chloramphenicol. The chain is Multidrug resistance protein MdtL from Escherichia coli O127:H6 (strain E2348/69 / EPEC).